A 224-amino-acid chain; its full sequence is Ion-translocating oxidoreductase complex subunit E (224 aa).

Transmembrane regions (helical) follow at residues Leu51–Phe71, Ile81–Ala101, Ser105–Gly125, Met140–Ile160, and His194–Ile214.

It belongs to the NqrDE/RnfAE family. In terms of assembly, the complex is composed of six subunits: RnfA, RnfB, RnfC, RnfD, RnfE and RnfG.

It is found in the cell inner membrane. Functionally, part of a membrane-bound complex that couples electron transfer with translocation of ions across the membrane. The polypeptide is Ion-translocating oxidoreductase complex subunit E (Pasteurella multocida (strain Pm70)).